The chain runs to 488 residues: N-succinylglutamate 5-semialdehyde dehydrogenase (488 aa).

An NAD(+)-binding site is contributed by 221–226; that stretch reads GSSRTG. Residues Glu244 and Cys278 contribute to the active site.

It belongs to the aldehyde dehydrogenase family. AstD subfamily.

The catalysed reaction is N-succinyl-L-glutamate 5-semialdehyde + NAD(+) + H2O = N-succinyl-L-glutamate + NADH + 2 H(+). It functions in the pathway amino-acid degradation; L-arginine degradation via AST pathway; L-glutamate and succinate from L-arginine: step 4/5. Catalyzes the NAD-dependent reduction of succinylglutamate semialdehyde into succinylglutamate. The protein is N-succinylglutamate 5-semialdehyde dehydrogenase of Pseudomonas syringae pv. tomato (strain ATCC BAA-871 / DC3000).